A 592-amino-acid chain; its full sequence is Aspartate--tRNA ligase (592 aa).

Position 171 (E171) interacts with L-aspartate. The segment at 195 to 198 is aspartate; sequence QLFK. R217 provides a ligand contact to L-aspartate. ATP contacts are provided by residues 217 to 219 and Q226; that span reads RDE. Position 448 (H448) interacts with L-aspartate. Residue E482 coordinates ATP. R489 contributes to the L-aspartate binding site. 534 to 537 serves as a coordination point for ATP; that stretch reads GLDR.

It belongs to the class-II aminoacyl-tRNA synthetase family. Type 1 subfamily. As to quaternary structure, homodimer.

The protein localises to the cytoplasm. The catalysed reaction is tRNA(Asp) + L-aspartate + ATP = L-aspartyl-tRNA(Asp) + AMP + diphosphate. Its function is as follows. Catalyzes the attachment of L-aspartate to tRNA(Asp) in a two-step reaction: L-aspartate is first activated by ATP to form Asp-AMP and then transferred to the acceptor end of tRNA(Asp). The sequence is that of Aspartate--tRNA ligase from Pseudoalteromonas translucida (strain TAC 125).